We begin with the raw amino-acid sequence, 185 residues long: Translocon-associated protein subunit gamma (185 aa).

Residue Met1 is modified to N-acetylmethionine. Over 1–27 the chain is Lumenal; the sequence is MAPKGSSKQQSEEDLLLQDFSRNLSAK. A phosphoserine mark is found at Ser7 and Ser11. A helical membrane pass occupies residues 28–48; it reads SSALFFGNAFIVSAIPIWLYW. Residues 49–54 lie on the Cytoplasmic side of the membrane; sequence RIWHMD. Residues 55-76 form a helical membrane-spanning segment; the sequence is LIQSAVLYSVMTLVSTYLVAFA. Residues 77 to 135 are Lumenal-facing; sequence YKNVKFVLKHKVAQKREDAVSKEVTRKLSEADNRKMSRKEKDERILWKKNEVADYEATT. At Ser105 the chain carries Phosphoserine. A helical transmembrane segment spans residues 136–157; the sequence is FSIFYNNTLFLVVVIVASFFIL. At 158–163 the chain is on the cytoplasmic side; it reads KNFNPT. The helical transmembrane segment at 164 to 184 threads the bilayer; sequence VNYILSISASSGLIALLSTGS.

Belongs to the TRAP-gamma family. In terms of assembly, heterotetramer of TRAP-alpha, TRAP-beta, TRAP-delta and TRAP-gamma.

The protein resides in the endoplasmic reticulum membrane. Functionally, TRAP proteins are part of a complex whose function is to bind calcium to the ER membrane and thereby regulate the retention of ER resident proteins. This chain is Translocon-associated protein subunit gamma (SSR3), found in Homo sapiens (Human).